The chain runs to 90 residues: Small ribosomal subunit protein bS20 (90 aa).

A disordered region spans residues 1-28; sequence MPNTSSASKRLRQNEKRRLLNRATRSNM.

The protein belongs to the bacterial ribosomal protein bS20 family.

In terms of biological role, binds directly to 16S ribosomal RNA. The polypeptide is Small ribosomal subunit protein bS20 (Rhodopirellula baltica (strain DSM 10527 / NCIMB 13988 / SH1)).